Consider the following 196-residue polypeptide: dITP/XTP pyrophosphatase (196 aa).

10-15 (SGNKGK) lines the substrate pocket. Mg(2+)-binding residues include E40 and D69. Residue D69 is the Proton acceptor of the active site. Substrate contacts are provided by residues S70, 147–150 (FGYD), K170, and 175–176 (HR).

Belongs to the HAM1 NTPase family. As to quaternary structure, homodimer. Mg(2+) is required as a cofactor.

The catalysed reaction is XTP + H2O = XMP + diphosphate + H(+). It carries out the reaction dITP + H2O = dIMP + diphosphate + H(+). The enzyme catalyses ITP + H2O = IMP + diphosphate + H(+). Its function is as follows. Pyrophosphatase that catalyzes the hydrolysis of nucleoside triphosphates to their monophosphate derivatives, with a high preference for the non-canonical purine nucleotides XTP (xanthosine triphosphate), dITP (deoxyinosine triphosphate) and ITP. Seems to function as a house-cleaning enzyme that removes non-canonical purine nucleotides from the nucleotide pool, thus preventing their incorporation into DNA/RNA and avoiding chromosomal lesions. In Prochlorococcus marinus (strain NATL1A), this protein is dITP/XTP pyrophosphatase.